We begin with the raw amino-acid sequence, 260 residues long: 5'-nucleotidase SurE (260 aa).

Positions 10, 11, 41, and 95 each coordinate a divalent metal cation.

The protein belongs to the SurE nucleotidase family. It depends on a divalent metal cation as a cofactor.

The protein resides in the cytoplasm. The enzyme catalyses a ribonucleoside 5'-phosphate + H2O = a ribonucleoside + phosphate. Functionally, nucleotidase that shows phosphatase activity on nucleoside 5'-monophosphates. The sequence is that of 5'-nucleotidase SurE from Methanoregula boonei (strain DSM 21154 / JCM 14090 / 6A8).